Here is a 148-residue protein sequence, read N- to C-terminus: Large ribosomal subunit protein bL9 (148 aa).

This sequence belongs to the bacterial ribosomal protein bL9 family.

In terms of biological role, binds to the 23S rRNA. This chain is Large ribosomal subunit protein bL9, found in Pseudomonas putida (strain GB-1).